A 284-amino-acid polypeptide reads, in one-letter code: 1D-myo-inositol 2-acetamido-2-deoxy-alpha-D-glucopyranoside deacetylase (284 aa).

3 residues coordinate Zn(2+): His12, Asp15, and His146.

Belongs to the MshB deacetylase family. Zn(2+) serves as cofactor.

It carries out the reaction 1D-myo-inositol 2-acetamido-2-deoxy-alpha-D-glucopyranoside + H2O = 1D-myo-inositol 2-amino-2-deoxy-alpha-D-glucopyranoside + acetate. Functionally, catalyzes the deacetylation of 1D-myo-inositol 2-acetamido-2-deoxy-alpha-D-glucopyranoside (GlcNAc-Ins) in the mycothiol biosynthesis pathway. The protein is 1D-myo-inositol 2-acetamido-2-deoxy-alpha-D-glucopyranoside deacetylase of Mycolicibacterium gilvum (strain PYR-GCK) (Mycobacterium gilvum (strain PYR-GCK)).